The chain runs to 158 residues: Crossover junction endodeoxyribonuclease RuvC (158 aa).

Active-site residues include Asp-7, Glu-66, and Asp-139. The Mg(2+) site is built by Asp-7, Glu-66, and Asp-139.

It belongs to the RuvC family. In terms of assembly, homodimer which binds Holliday junction (HJ) DNA. The HJ becomes 2-fold symmetrical on binding to RuvC with unstacked arms; it has a different conformation from HJ DNA in complex with RuvA. In the full resolvosome a probable DNA-RuvA(4)-RuvB(12)-RuvC(2) complex forms which resolves the HJ. Mg(2+) is required as a cofactor.

Its subcellular location is the cytoplasm. It catalyses the reaction Endonucleolytic cleavage at a junction such as a reciprocal single-stranded crossover between two homologous DNA duplexes (Holliday junction).. The RuvA-RuvB-RuvC complex processes Holliday junction (HJ) DNA during genetic recombination and DNA repair. Endonuclease that resolves HJ intermediates. Cleaves cruciform DNA by making single-stranded nicks across the HJ at symmetrical positions within the homologous arms, yielding a 5'-phosphate and a 3'-hydroxyl group; requires a central core of homology in the junction. The consensus cleavage sequence is 5'-(A/T)TT(C/G)-3'. Cleavage occurs on the 3'-side of the TT dinucleotide at the point of strand exchange. HJ branch migration catalyzed by RuvA-RuvB allows RuvC to scan DNA until it finds its consensus sequence, where it cleaves and resolves the cruciform DNA. The polypeptide is Crossover junction endodeoxyribonuclease RuvC (Campylobacter jejuni subsp. jejuni serotype O:6 (strain 81116 / NCTC 11828)).